The following is an 83-amino-acid chain: Small ribosomal subunit protein eS21 (83 aa).

Belongs to the eukaryotic ribosomal protein eS21 family. In terms of assembly, component of the 40S small ribosomal subunit.

Its subcellular location is the cytoplasm. It localises to the cytosol. The protein localises to the rough endoplasmic reticulum. The sequence is that of Small ribosomal subunit protein eS21 (RpS21) from Biphyllus lunatus (Beetle).